A 2378-amino-acid polypeptide reads, in one-letter code: Serine/threonine-protein kinase ATM (2378 aa).

Positions Leu-1415–Glu-1937 constitute an FAT domain. A PI3K/PI4K catalytic domain is found at Trp-2044–Asn-2366. A G-loop region spans residues Ile-2050 to Thr-2056. The segment at Gly-2218 to Asn-2226 is catalytic loop. Residues His-2238–Thr-2263 are activation loop. Positions Thr-2346–Leu-2378 constitute an FATC domain.

This sequence belongs to the PI3/PI4-kinase family. ATM subfamily.

It localises to the nucleus. It catalyses the reaction L-seryl-[protein] + ATP = O-phospho-L-seryl-[protein] + ADP + H(+). The catalysed reaction is L-threonyl-[protein] + ATP = O-phospho-L-threonyl-[protein] + ADP + H(+). In terms of biological role, serine/threonine protein kinase which activates checkpoint signaling in the presence of DNA double strand breaks (DSBs) and other forms of DNA damage induced by ionizing radiation and other genotoxic stresses such as UV. Plays a role in maintaining genome stability. This is Serine/threonine-protein kinase ATM (atm-1) from Caenorhabditis elegans.